Reading from the N-terminus, the 300-residue chain is Cutinase est2 (300 aa).

Residues 1-39 (MSVTTPRRETSLLSRALRATAAAATAVVATVALAAPAQA) form the signal peptide. Poly(ethylene terephthalate) is bound at residue tyrosine 99. Serine 169 functions as the Nucleophile in the catalytic mechanism. The poly(ethylene terephthalate) site is built by methionine 170 and tryptophan 194. Glutamate 213 provides a ligand contact to Ca(2+). Aspartate 215 (charge relay system) is an active-site residue. Aspartate 243 is a binding site for Ca(2+). The active-site Charge relay system is the histidine 247. Cysteine 280 and cysteine 298 are joined by a disulfide. Glutamate 292 provides a ligand contact to Ca(2+).

The protein belongs to the AB hydrolase superfamily. In terms of assembly, monomer. It depends on Ca(2+) as a cofactor.

It is found in the secreted. Its subcellular location is the periplasm. It carries out the reaction an acetyl ester + H2O = an aliphatic alcohol + acetate + H(+). It catalyses the reaction (ethylene terephthalate)(n) + H2O = (ethylene terephthalate)(n-1) + 4-[(2-hydroxyethoxy)carbonyl]benzoate + H(+). The enzyme catalyses a butanoate ester + H2O = an aliphatic alcohol + butanoate + H(+). The catalysed reaction is cutin + H2O = cutin monomers.. It carries out the reaction a hexanoate ester + H2O = an aliphatic alcohol + hexanoate + H(+). It catalyses the reaction an octanoate ester + H2O = an aliphatic alcohol + octanoate + H(+). Activated by calcium ions. Activated by magnesium ions. Activated by manganese ions. Inhibited by the serine hydrolase inhibitor phenylmethanesulfonyl fluoride (PMSF). Inhibited by the chelator ethylenediaminetetraacetic acid (EDTA). Inhibited by iron ions. Inhibited by aluminum ions. Inhibited by rubidium ions. Inhibited by lithium ions. Functionally, catalyzes the hydrolysis of cutin, a polyester that forms the structure of plant cuticle. Shows esterase activity towards p-nitrophenol-linked aliphatic esters (pNP-aliphatic esters). Capable of degrading the plastic poly(ethylene terephthalate) (PET), the most abundant polyester plastic in the world. Can also depolymerize the synthetic polyesters poly(epsilon-caprolactone) (PCL), poly(butylene succinate-co-adipate) (PBSA), poly(butylene succinate) (PBS), and poly(lactic acid) (PLA). This chain is Cutinase est2, found in Thermobifida alba (Thermomonospora alba).